A 530-amino-acid chain; its full sequence is Ubiquitin carboxyl-terminal hydrolase 17-like protein 20 (530 aa).

The USP domain maps to 80–375 (AGLQNMGNTC…QAYVLFYIQK (296 aa)). The Nucleophile role is filled by Cys89. His334 serves as the catalytic Proton acceptor. Basic and acidic residues-rich tracts occupy residues 382-392 (SESVSRGREPR) and 398-413 (DTDRRATQGELKRDHP). 2 disordered regions span residues 382 to 413 (SESVSRGREPRALGAEDTDRRATQGELKRDHP) and 509 to 530 (RGRARRSKGKNKHSKRALLVCQ). Residues 510 to 524 (GRARRSKGKNKHSKR) are compositionally biased toward basic residues.

This sequence belongs to the peptidase C19 family. USP17 subfamily.

It is found in the nucleus. The protein resides in the endoplasmic reticulum. The catalysed reaction is Thiol-dependent hydrolysis of ester, thioester, amide, peptide and isopeptide bonds formed by the C-terminal Gly of ubiquitin (a 76-residue protein attached to proteins as an intracellular targeting signal).. Functionally, deubiquitinating enzyme that removes conjugated ubiquitin from specific proteins to regulate different cellular processes that may include cell proliferation, progression through the cell cycle, apoptosis, cell migration, and the cellular response to viral infection. The protein is Ubiquitin carboxyl-terminal hydrolase 17-like protein 20 (USP17L20) of Homo sapiens (Human).